A 219-amino-acid chain; its full sequence is Orotidine 5'-phosphate decarboxylase (219 aa).

Substrate-binding positions include D10, K32, 58-67, S113, 163-173, G186, and R187; these read DFKVADIPYT and PGIGAQGGDPY. The Proton donor role is filled by K60.

It belongs to the OMP decarboxylase family. Type 1 subfamily. As to quaternary structure, homodimer.

The enzyme catalyses orotidine 5'-phosphate + H(+) = UMP + CO2. The protein operates within pyrimidine metabolism; UMP biosynthesis via de novo pathway; UMP from orotate: step 2/2. Its function is as follows. Catalyzes the decarboxylation of orotidine 5'-monophosphate (OMP) to uridine 5'-monophosphate (UMP). The sequence is that of Orotidine 5'-phosphate decarboxylase from Thermoplasma volcanium (strain ATCC 51530 / DSM 4299 / JCM 9571 / NBRC 15438 / GSS1).